A 76-amino-acid polypeptide reads, in one-letter code: Conotoxin ArMKLT2-032 (76 aa).

The first 22 residues, 1-22 (MKLTCVLIIAVLFLTACQLTTG), serve as a signal peptide directing secretion. Residues 23 to 46 (ETYSRGEQKDHALRSTDKNSKLTR) constitute a propeptide that is removed on maturation. Position 47 is a pyrrolidone carboxylic acid (glutamine 47). 3 disulfide bridges follow: cysteine 48–cysteine 62, cysteine 55–cysteine 66, and cysteine 61–cysteine 73.

It belongs to the conotoxin O1 superfamily. As to expression, expressed by the venom duct.

It is found in the secreted. This is Conotoxin ArMKLT2-032 from Conus arenatus (Sand-dusted cone).